The sequence spans 965 residues: Forespore membrane adapter protein MUG56 (965 aa).

A disordered region spans residues 70-175; the sequence is SFLMHKSTDE…VQNSNSTSTS (106 aa). Positions 82–101 are enriched in polar residues; it reads DTPSNLDSPSTQNVGSTNNT. Residues 102–114 show a composition bias toward low complexity; that stretch reads RASQSLLRRSSSF. A compositionally biased stretch (polar residues) spans 124–158; it reads THASTDNNPFSESSTLQPQTAERTSQQAVRSAITE. The segment covering 159–175 has biased composition (low complexity); that stretch reads TTNPSVSVQNSNSTSTS. 2 consecutive PH domains span residues 562 to 737 and 800 to 961; these read PTPV…EVAS and VIRM…KEIN.

This sequence belongs to the SPO71 family.

Its subcellular location is the cytoplasm. The protein resides in the nucleus. It is found in the prospore membrane. Its function is as follows. May recruit a lipid transfer protein to the forespore membrane during sporulation, thereby aiding forespore membrane formation. Required for meiosis. This chain is Forespore membrane adapter protein MUG56, found in Schizosaccharomyces pombe (strain 972 / ATCC 24843) (Fission yeast).